Here is a 232-residue protein sequence, read N- to C-terminus: Peptidyl-prolyl cis-trans isomerase FKBP18, chloroplastic (232 aa).

A PPIase FKBP-type domain is found at 108 to 226; sequence GSTAQVHFDC…ELNIELLRVT (119 aa).

It belongs to the FKBP-type PPIase family.

The protein resides in the plastid. Its subcellular location is the chloroplast thylakoid lumen. It carries out the reaction [protein]-peptidylproline (omega=180) = [protein]-peptidylproline (omega=0). In terms of biological role, PPIases accelerate the folding of proteins. It catalyzes the cis-trans isomerization of proline imidic peptide bonds in oligopeptides. The sequence is that of Peptidyl-prolyl cis-trans isomerase FKBP18, chloroplastic (FKBP18) from Arabidopsis thaliana (Mouse-ear cress).